We begin with the raw amino-acid sequence, 105 residues long: Protein SMALL AUXIN UP-REGULATED RNA 16 (105 aa).

This sequence belongs to the ARG7 family. Expressed in etiolated hypocotyls, cotyledons, leaves, flowers and siliques.

The protein resides in the cell membrane. Functionally, provide a mechanistic link between auxin and plasma membrane H(+)-ATPases (PM H(+)-ATPases, e.g. AHA1 and AHA2), and triggers PM H(+)-ATPases activity by promoting phosphorylation of their C-terminal autoinhibitory domain as a result of PP2C-D subfamily of type 2C phosphatases inhibition, thus leading to the acidification of the apoplast and the facilitation of solutes and water uptake to drive cell expansion. Triggers plant growth probably by promoting cell elongation. Regulates branch angles and bending. The sequence is that of Protein SMALL AUXIN UP-REGULATED RNA 16 from Arabidopsis thaliana (Mouse-ear cress).